We begin with the raw amino-acid sequence, 269 residues long: Acyl-CoA-binding domain-containing protein 4 (269 aa).

The 90-residue stretch at 12-101 (CQKQFQAAVS…MKLVAQKVID (90 aa)) folds into the ACB domain. An acyl-CoA is bound by residues 23–32 (IQNLPKNGSY), 43–47 (YSYYK), Lys-69, and Tyr-88. Disordered regions lie at residues 150-175 (GAVSEPPCLPKEPAPPSPESHSPRDL), 195-226 (EQRAASGEKRDPRNSPVPPTEKEAAAQAQCSA), and 248-269 (VALPNVSDPKEVTVSGGVSAAN). The segment covering 156–167 (PCLPKEPAPPSP) has biased composition (pro residues). Ser-166 and Ser-171 each carry phosphoserine.

In terms of biological role, binds medium- and long-chain acyl-CoA esters and may function as an intracellular carrier of acyl-CoA esters. The protein is Acyl-CoA-binding domain-containing protein 4 (ACBD4) of Pongo abelii (Sumatran orangutan).